Reading from the N-terminus, the 90-residue chain is Probable Fe(2+)-trafficking protein (90 aa).

This sequence belongs to the Fe(2+)-trafficking protein family.

Functionally, could be a mediator in iron transactions between iron acquisition and iron-requiring processes, such as synthesis and/or repair of Fe-S clusters in biosynthetic enzymes. This chain is Probable Fe(2+)-trafficking protein, found in Hydrogenovibrio crunogenus (strain DSM 25203 / XCL-2) (Thiomicrospira crunogena).